Reading from the N-terminus, the 878-residue chain is Phosphoenolpyruvate carboxylase (878 aa).

Catalysis depends on residues H140 and K545.

The protein belongs to the PEPCase type 1 family. It depends on Mg(2+) as a cofactor.

The catalysed reaction is oxaloacetate + phosphate = phosphoenolpyruvate + hydrogencarbonate. In terms of biological role, forms oxaloacetate, a four-carbon dicarboxylic acid source for the tricarboxylic acid cycle. This chain is Phosphoenolpyruvate carboxylase, found in Pseudomonas aeruginosa (strain ATCC 15692 / DSM 22644 / CIP 104116 / JCM 14847 / LMG 12228 / 1C / PRS 101 / PAO1).